We begin with the raw amino-acid sequence, 273 residues long: MNNRVHQGHLARKRFGQNFLNDQFVIDSIVSAINPQKGQAMVEIGPGLAALTEPVGERLDQLTVIELDRDLAARLQTHPFLGPKLTIYQQDAMTFNFGELAEKMGQPLRVFGNLPYNISTPLMFHLFSYTDAIADMHFMLQKEVVNRLVAGPNSKAYGRLSVMAQYYCNVIPVLEVPPSAFTPPPKVDSAVVRLVPHATMPHPVKDVRVLSRITTEAFNQRRKTIRNSLGNLFSVEVLTGMGIDPAMRAENISVAQYCQMANYLAENATLQES.

6 residues coordinate S-adenosyl-L-methionine: Asn-18, Leu-20, Gly-45, Glu-66, Asp-91, and Asn-113.

The protein belongs to the class I-like SAM-binding methyltransferase superfamily. rRNA adenine N(6)-methyltransferase family. RsmA subfamily.

It is found in the cytoplasm. The enzyme catalyses adenosine(1518)/adenosine(1519) in 16S rRNA + 4 S-adenosyl-L-methionine = N(6)-dimethyladenosine(1518)/N(6)-dimethyladenosine(1519) in 16S rRNA + 4 S-adenosyl-L-homocysteine + 4 H(+). Functionally, specifically dimethylates two adjacent adenosines (A1518 and A1519) in the loop of a conserved hairpin near the 3'-end of 16S rRNA in the 30S particle. May play a critical role in biogenesis of 30S subunits. This is Ribosomal RNA small subunit methyltransferase A from Escherichia coli (strain SE11).